The chain runs to 263 residues: Protein maestro (263 aa).

Positions 1 to 21 (MDQTPRRMLGQPLSSPATQPK) are disordered. One copy of the HEAT repeat lies at 128-163 (SFFIDITLQTRTLLDDENDSLRYSAFVLFGQLADLA).

It is found in the nucleus. The protein resides in the nucleolus. The polypeptide is Protein maestro (MRO) (Bos taurus (Bovine)).